A 299-amino-acid chain; its full sequence is Glutamyl-Q tRNA(Asp) synthetase (299 aa).

L-glutamate contacts are provided by residues 18-22 (RFAPS) and glutamate 54. A 'HIGH' region motif is present at residues 21–31 (PSPSGALHFGS). 4 residues coordinate Zn(2+): cysteine 110, cysteine 112, tyrosine 124, and cysteine 128. Positions 181 and 199 each coordinate L-glutamate. The 'KMSKS' region motif lies at 237-241 (KLSKQ). Lysine 240 is a binding site for ATP.

This sequence belongs to the class-I aminoacyl-tRNA synthetase family. GluQ subfamily. Zn(2+) serves as cofactor.

Functionally, catalyzes the tRNA-independent activation of glutamate in presence of ATP and the subsequent transfer of glutamate onto a tRNA(Asp). Glutamate is transferred on the 2-amino-5-(4,5-dihydroxy-2-cyclopenten-1-yl) moiety of the queuosine in the wobble position of the QUC anticodon. This chain is Glutamyl-Q tRNA(Asp) synthetase, found in Shewanella oneidensis (strain ATCC 700550 / JCM 31522 / CIP 106686 / LMG 19005 / NCIMB 14063 / MR-1).